Consider the following 348-residue polypeptide: uncharacterized protein (348 aa).

It belongs to the Mu gp47/PBSX XkdT family.

This is an uncharacterized protein from Bacillus subtilis (strain 168).